The following is a 596-amino-acid chain: Nodulation outer protein X (596 aa).

It is found in the secreted. The chain is Nodulation outer protein X (nopX) from Sinorhizobium fredii (strain NBRC 101917 / NGR234).